The following is a 118-amino-acid chain: Beta-2-microglobulin (118 aa).

An N-terminal signal peptide occupies residues 1 to 21 (MGSRWGIAVLGLFCFVSCLEA). Positions 26-113 (PKIQVYSRHP…VHEGVKKTVK (88 aa)) constitute an Ig-like C1-type domain. Cysteines 46 and 101 form a disulfide.

This sequence belongs to the beta-2-microglobulin family. In terms of assembly, heterodimer of an alpha chain and a beta chain. Beta-2-microglobulin is the beta-chain of major histocompatibility complex class I molecules.

It is found in the secreted. Its function is as follows. Component of the class I major histocompatibility complex (MHC). Involved in the presentation of peptide antigens to the immune system. The polypeptide is Beta-2-microglobulin (B2M) (Ornithorhynchus anatinus (Duckbill platypus)).